A 103-amino-acid chain; its full sequence is Large ribosomal subunit protein bL21 (103 aa).

It belongs to the bacterial ribosomal protein bL21 family. As to quaternary structure, part of the 50S ribosomal subunit. Contacts protein L20.

Its function is as follows. This protein binds to 23S rRNA in the presence of protein L20. This Paraburkholderia phymatum (strain DSM 17167 / CIP 108236 / LMG 21445 / STM815) (Burkholderia phymatum) protein is Large ribosomal subunit protein bL21.